The chain runs to 113 residues: U11-theraphotoxin-Hhn1a (113 aa).

Positions 1–21 (MNTVRVTFLLVFVLAVSLGQA) are cleaved as a signal peptide. A propeptide spanning residues 22-74 (DKDENRMEMQEKTEQGKSYLDFAENLLLQKLEELEAKLPEEDSEESRNSRQKR) is cleaved from the precursor. Positions 58–69 (KLPEEDSEESRN) are enriched in basic and acidic residues. Positions 58-82 (KLPEEDSEESRNSRQKRCIGEGVPC) are disordered. 3 disulfide bridges follow: Cys-75/Cys-90, Cys-82/Cys-95, and Cys-89/Cys-110.

The protein belongs to the neurotoxin 14 (magi-1) family. 01 (HNTX-16) subfamily. As to expression, expressed by the venom gland.

It localises to the secreted. Its function is as follows. Probable ion channel inhibitor. In Cyriopagopus hainanus (Chinese bird spider), this protein is U11-theraphotoxin-Hhn1a.